The sequence spans 168 residues: Transcription antitermination protein NusB (168 aa).

It belongs to the NusB family.

In terms of biological role, involved in transcription antitermination. Required for transcription of ribosomal RNA (rRNA) genes. Binds specifically to the boxA antiterminator sequence of the ribosomal RNA (rrn) operons. This chain is Transcription antitermination protein NusB, found in Prosthecochloris aestuarii (strain DSM 271 / SK 413).